An 87-amino-acid polypeptide reads, in one-letter code: Keratin-associated protein 19-1 (87 aa).

The tract at residues 6-72 (GYSGGLGYGY…SSYGGYGCGC (67 aa)) is 21 X 2 AA repeats of G-[YCGS].

The protein belongs to the KRTAP type 19 family. In terms of assembly, interacts with hair keratins. In terms of tissue distribution, strong expression in narrowly defined pattern restricted to the lower and middle cortical regions of the hair shaft in both developing and cycling hair. During hair follicle regression (catagen), expression levels decrease until expression is no longer detectable in follicles at resting stage (telogen).

Its function is as follows. In the hair cortex, hair keratin intermediate filaments are embedded in an interfilamentous matrix, consisting of hair keratin-associated proteins (KRTAP), which are essential for the formation of a rigid and resistant hair shaft through their extensive disulfide bond cross-linking with abundant cysteine residues of hair keratins. The matrix proteins include the high-sulfur and high-glycine-tyrosine keratins. This Mus musculus (Mouse) protein is Keratin-associated protein 19-1 (Krtap19-1).